A 245-amino-acid polypeptide reads, in one-letter code: Probable phosphatase YPTB2019 (245 aa).

Positions 7, 9, 15, 40, 73, 101, 131, 192, and 194 each coordinate Zn(2+).

The protein belongs to the PHP family. In terms of assembly, homotrimer. Zn(2+) is required as a cofactor.

In Yersinia pseudotuberculosis serotype I (strain IP32953), this protein is Probable phosphatase YPTB2019.